A 675-amino-acid chain; its full sequence is Protein PALS1 (675 aa).

Positions 1-345 are required for the correct localization of PALS1 and PATJ at cell-cell contacts and the normal formation of tight junctions and adherens junctions; it reads MTTSYMNGHV…QQIKPPPAKE (345 aa). A phosphoserine mark is found at serine 14 and serine 25. Residues 21 to 140 form an interaction with PARD6B region; sequence LDLASPEEYP…LKHIQHTLVD (120 aa). The disordered stretch occupies residues 51-79; that stretch reads RRSAQLERIRQQQEDMRRRREEEGKKQEL. Residues 54–79 show a composition bias toward basic and acidic residues; the sequence is AQLERIRQQQEDMRRRREEEGKKQEL. Serine 83 and serine 84 each carry phosphoserine. L27 domains follow at residues 120-177 and 179-235; these read NILD…SKAS and PFPL…MQLE. Positions 181-243 are interaction with LIN7C; sequence PLIANVQDLV…LEPITDERVY (63 aa). The PDZ domain maps to 256-336; it reads IVRIEKARDI…TLTFVLIPSQ (81 aa). The SH3 domain maps to 345–417; that stretch reads ETVIHVKAHF…PGKSFQQQRE (73 aa). Residues 479-660 form the Guanylate kinase-like domain; sequence KRPIILIGPQ…AYQELLRLIN (182 aa). ATP is bound at residue 486-493; sequence GPQNCGQN.

It belongs to the MAGUK family. As to quaternary structure, heterodimer with MPP1. Forms a heterotrimeric complex composed of PALS1, LIN7B and PATJ; the N-terminal L27 domain of PALS1 interacts with the L27 domain of PATJ and the C-terminal L27 domain of PALS1 interacts with the L27 domain of LIN7B. Component of a complex composed of PALS1, CRB1 and MPP4. Component of a complex whose core is composed of ARHGAP17, AMOT, PALS1, PATJ and PARD3/PAR3. Component of a complex composed of PALS1, CRB1 and EPB41L5. Within the complex, interacts (via HOOK domain) with EPB41L5 (via FERM domain), and interacts with CRB1 (via intracellular domain). Component of a complex composed of PALS1, MPP3 and CRB1; PALS1 acts as a bridging protein between MPP3 (via guanylate kinase-like domain) and CRB1. Component of a complex composed of CRB3, PALS1 and PATJ. As part of the Crumbs complex; interacts with WWP1, the interaction is enhanced by AMOTL2 and facilitates WWP1 localization to the plasma membrane. The Crumbs complex promotes monoubiquitination of AMOTL2 by WWP1, which activates the Hippo signaling pathway. Interacts (via PDZ domain) with PATJ (via N-terminus). Interacts with EZR. Interacts (via PDZ domain) with CRB1 (via C-terminal ERLI motif). While the PDZ domain is sufficient for interaction with CRB1, the adjacent SH3 and guanylate kinase-like domains are likely to contribute to a high affinity interaction. Interacts with WWTR1/TAZ (via WW domain). Interacts with MPP7. Interacts (via PDZ domain) with CRB3 (via C-terminus). Interacts with LIN7C. Interacts with MPDZ. Interacts with PARD6B. Interacts with SC6A1. Interacts with CDH5; the interaction promotes PALS1 localization to cell junctions and is required for CDH5-mediated vascular lumen formation and endothelial cell. Interacts with NPHP1 (via coiled coil and SH3 domains). Interacts with NPHP4. Interacts with CRB2. Expressed in the retinal pigment epithelium (at protein level). Expressed in the vascular plexus of the retina (at protein level). In the brain, expressed in the dentate gyrus of hippocampus, striatum and cerebellum (at protein level). Expressed in the sciatic nerve (at protein level). Expressed in the kidney nephron (at protein level). Expressed in the lung, and heart. Expressed in placenta, brain, skeletal muscles, pancreas and liver.

The protein resides in the golgi apparatus. The protein localises to the cell membrane. Its subcellular location is the endomembrane system. It is found in the cell junction. It localises to the tight junction. The protein resides in the adherens junction. The protein localises to the cell projection. Its subcellular location is the axon. It is found in the perikaryon. It localises to the apical cell membrane. Functionally, plays a role in tight junction biogenesis and in the establishment of cell polarity in epithelial cells. Also involved in adherens junction biogenesis by ensuring correct localization of the exocyst complex protein EXOC4/SEC8 which allows trafficking of adherens junction structural component CDH1 to the cell surface. Plays a role through its interaction with CDH5 in vascular lumen formation and endothelial membrane polarity. Required during embryonic and postnatal retinal development. Required for the maintenance of cerebellar progenitor cells in an undifferentiated proliferative state, preventing premature differentiation, and is required for cerebellar histogenesis, fissure formation, cerebellar layer organization and cortical development. Plays a role in neuronal progenitor cell survival, potentially via promotion of mTOR signaling. Plays a role in the radial and longitudinal extension of the myelin sheath in Schwann cells. May modulate SC6A1/GAT1-mediated GABA uptake by stabilizing the transporter. May play a role in the T-cell receptor-mediated activation of NF-kappa-B. Required for localization of EZR to the apical membrane of parietal cells and may play a role in the dynamic remodeling of the apical cytoskeleton. Required for the normal polarized localization of the vesicular marker STX4. Required for the correct trafficking of the myelin proteins PMP22 and MAG. Involved in promoting phosphorylation and cytoplasmic retention of transcriptional coactivators YAP1 and WWTR1/TAZ which leads to suppression of TGFB1-dependent transcription of target genes such as CCN2/CTGF, SERPINE1/PAI1, SNAI1/SNAIL1 and SMAD7. The protein is Protein PALS1 of Mus musculus (Mouse).